A 335-amino-acid chain; its full sequence is Biotin synthase (335 aa).

One can recognise a Radical SAM core domain in the interval 51–281; that stretch reads YRVQLASLLS…RSRVRLSAGR (231 aa). 3 residues coordinate [4Fe-4S] cluster: Cys-66, Cys-70, and Cys-73. Positions 112, 144, 204, and 276 each coordinate [2Fe-2S] cluster.

The protein belongs to the radical SAM superfamily. Biotin synthase family. Homodimer. Requires [4Fe-4S] cluster as cofactor. It depends on [2Fe-2S] cluster as a cofactor.

The catalysed reaction is (4R,5S)-dethiobiotin + (sulfur carrier)-SH + 2 reduced [2Fe-2S]-[ferredoxin] + 2 S-adenosyl-L-methionine = (sulfur carrier)-H + biotin + 2 5'-deoxyadenosine + 2 L-methionine + 2 oxidized [2Fe-2S]-[ferredoxin]. Its pathway is cofactor biosynthesis; biotin biosynthesis; biotin from 7,8-diaminononanoate: step 2/2. Its function is as follows. Catalyzes the conversion of dethiobiotin (DTB) to biotin by the insertion of a sulfur atom into dethiobiotin via a radical-based mechanism. In Prochlorococcus marinus (strain MIT 9303), this protein is Biotin synthase.